Here is a 617-residue protein sequence, read N- to C-terminus: Alkaline/neutral invertase E, chloroplastic (617 aa).

Residues 1–45 (MAASETVLRVPLGSVSQSCYLASFFVNSTPNLSFKPVSRNRKTVR) constitute a chloroplast transit peptide. At S87 the chain carries Phosphoserine.

This sequence belongs to the glycosyl hydrolase 100 family. As to expression, expressed in roots, leaves and flowers.

Its subcellular location is the plastid. The protein localises to the chloroplast. The enzyme catalyses Hydrolysis of terminal non-reducing beta-D-fructofuranoside residues in beta-D-fructofuranosides.. In terms of biological role, chloroplastic invertase that cleaves sucrose into glucose and fructose and is associated with the development of the photosynthetic apparatus and the assimilation of nitrogen in seedlings to control the sucrose to hexose ratio. Participates in the carbon flux between the cytosol and plastids in leaves. The sequence is that of Alkaline/neutral invertase E, chloroplastic from Arabidopsis thaliana (Mouse-ear cress).